The sequence spans 95 residues: Large ribosomal subunit protein eL42 (95 aa).

Residues C11, C14, C71, and C74 each contribute to the Zn(2+) site. A C4-type zinc finger spans residues 11–74 (CPRCNTHTEH…QVLVITCTVC (64 aa)).

Belongs to the eukaryotic ribosomal protein eL42 family. In terms of assembly, part of the 50S ribosomal subunit. The cofactor is Zn(2+).

Functionally, binds to the 23S rRNA. In Aeropyrum pernix (strain ATCC 700893 / DSM 11879 / JCM 9820 / NBRC 100138 / K1), this protein is Large ribosomal subunit protein eL42.